A 295-amino-acid polypeptide reads, in one-letter code: HTH-type transcriptional regulator TfdS (295 aa).

Residues 1–58 (MEFRQLRYFVAAAEEGNVGAAARRLHISQPPVTRQIHALEQHLGVLLFERSARGVQLT) form the HTH lysR-type domain. The segment at residues 18-37 (VGAAARRLHISQPPVTRQIH) is a DNA-binding region (H-T-H motif).

This sequence belongs to the LysR transcriptional regulatory family.

The protein resides in the cytoplasm. Involved in the regulation of 3-chlorocatechol degradation. Transcriptional regulator of tfdB expression. Acts as a repressor in the absence of its effector (either 2-cis-chlorodiene lactone or chloromaleylacetate) but acts as an activator when its effector is present. This Cupriavidus pinatubonensis (strain JMP 134 / LMG 1197) (Cupriavidus necator (strain JMP 134)) protein is HTH-type transcriptional regulator TfdS (tfdS).